The sequence spans 589 residues: MVGQMYCYPGSHLARALTRALALALVLALLVGPFLSGLAGAIPAPGGRWARDGQVPPASRSRSVLLDVSAGQLLMVDGRHPDAVAWANLTNAIRETGWAFLELGTSGQYNDSLQAYAAGVVEAAVSEELIYMHWMNTVVNYCGPFEYEVGYCERLKSFLEANLEWMQEEMESNPDSPYWHQVRLTLLQLKGLEDSYEGRVSFPAGKFTIKPLGFLLLQLSGDLEDLELALNKTKIKPSLGSGSCSALIKLLPGQSDLLVAHNTWNNYQHMLRVIKKYWLQFREGPWGDYPLVPGNKLVFSSYPGTIFSCDDFYILGSGLVTLETTIGNKNPALWKYVRPRGCVLEWVRNIVANRLASDGATWADIFKRFNSGTYNNQWMIVDYKAFIPGGPSPGSRVLTILEQIPGMVVVADKTSELYQKTYWASYNIPSFETVFNASGLQALVAQYGDWFSYDGSPRAQIFRRNQSLVQDMDSMVRLMRYNDFLHDPLSLCKACNPQPNGENAISARSDLNPANGSYPFQALRQRSHGGIDVKVTSMSLARILSLLAASGPTWDQVPPFQWSTSPFSGLLHMGQPDLWKFAPVKVSWD.

An N-terminal signal peptide occupies residues 1 to 41 (MVGQMYCYPGSHLARALTRALALALVLALLVGPFLSGLAGA). Asn-88 and Asn-110 each carry an N-linked (GlcNAc...) asparagine glycan. The cysteines at positions 142 and 152 are disulfide-linked. N-linked (GlcNAc...) asparagine glycans are attached at residues Asn-231, Asn-436, and Asn-465. Cys-492 and Cys-495 are oxidised to a cystine. Asn-515 carries N-linked (GlcNAc...) asparagine glycosylation.

This sequence belongs to the phospholipase B-like family. Interacts with IGF2R. The p76 protein is synthesized as a 80 kDa precursor which is then processed into a N-terminal 32 kDa form and a C-terminal 45 kDa form. Post-translationally, glycosylated; contains mannose 6-phosphate sugars. As to expression, ubiquitously expressed, with highest levels in heart, brain and liver.

The protein localises to the lysosome lumen. In terms of biological role, putative phospholipase. The chain is Putative phospholipase B-like 2 (PLBD2) from Homo sapiens (Human).